A 153-amino-acid chain; its full sequence is Insulin-like growth factor 1 (153 aa).

A b region spans residues Gly49–Thr77. 3 cysteine pairs are disulfide-bonded: Cys54/Cys96, Cys66/Cys109, and Cys95/Cys100. A c region spans residues Gly78–Thr89. The interval Gly90–Ala110 is a. The d stretch occupies residues Pro111–Ala118. Residues Arg119 to Met153 constitute a propeptide, e peptide. A disordered region spans residues Arg119–Met153. Residues Arg125 to Leu138 are compositionally biased toward basic and acidic residues. The segment covering Lys139–Met153 has biased composition (polar residues).

Belongs to the insulin family. As to quaternary structure, forms a ternary complex with IGFR1 and ITGAV:ITGB3. Forms a ternary complex with IGFR1 and ITGA6:ITGB4. Forms a ternary complex with IGFBP3 and ALS.

Its subcellular location is the secreted. Functionally, the insulin-like growth factors, isolated from plasma, are structurally and functionally related to insulin but have a much higher growth-promoting activity. May be a physiological regulator of [1-14C]-2-deoxy-D-glucose (2DG) transport and glycogen synthesis in osteoblasts. Stimulates glucose transport in bone-derived osteoblastic (PyMS) cells and is effective at much lower concentrations than insulin, not only regarding glycogen and DNA synthesis but also with regard to enhancing glucose uptake. May play a role in synapse maturation. Ca(2+)-dependent exocytosis of IGF1 is required for sensory perception of smell in the olfactory bulb. Acts as a ligand for IGF1R. Binds to the alpha subunit of IGF1R, leading to the activation of the intrinsic tyrosine kinase activity which autophosphorylates tyrosine residues in the beta subunit thus initiating a cascade of down-stream signaling events leading to activation of the PI3K-AKT/PKB and the Ras-MAPK pathways. Binds to integrins ITGAV:ITGB3 and ITGA6:ITGB4. Its binding to integrins and subsequent ternary complex formation with integrins and IGFR1 are essential for IGF1 signaling. Induces the phosphorylation and activation of IGFR1, MAPK3/ERK1, MAPK1/ERK2 and AKT1. As part of the MAPK/ERK signaling pathway, acts as a negative regulator of apoptosis in cardiomyocytes via promotion of STUB1/CHIP-mediated ubiquitination and degradation of ICER-type isoforms of CREM. The chain is Insulin-like growth factor 1 from Rattus norvegicus (Rat).